The following is a 324-amino-acid chain: Acetyl-coenzyme A carboxylase carboxyl transferase subunit alpha (324 aa).

A CoA carboxyltransferase C-terminal domain is found at 41–291; the sequence is RLDRLKEKIY…QEYVLQEWLK (251 aa).

It belongs to the AccA family. Acetyl-CoA carboxylase is a heterohexamer composed of biotin carboxyl carrier protein (AccB), biotin carboxylase (AccC) and two subunits each of ACCase subunit alpha (AccA) and ACCase subunit beta (AccD).

Its subcellular location is the cytoplasm. The enzyme catalyses N(6)-carboxybiotinyl-L-lysyl-[protein] + acetyl-CoA = N(6)-biotinyl-L-lysyl-[protein] + malonyl-CoA. The protein operates within lipid metabolism; malonyl-CoA biosynthesis; malonyl-CoA from acetyl-CoA: step 1/1. Functionally, component of the acetyl coenzyme A carboxylase (ACC) complex. First, biotin carboxylase catalyzes the carboxylation of biotin on its carrier protein (BCCP) and then the CO(2) group is transferred by the carboxyltransferase to acetyl-CoA to form malonyl-CoA. The polypeptide is Acetyl-coenzyme A carboxylase carboxyl transferase subunit alpha (Chlamydia muridarum (strain MoPn / Nigg)).